We begin with the raw amino-acid sequence, 490 residues long: Delta(14)-sterol reductase (490 aa).

Helical transmembrane passes span 23 to 43 (FGGPIGAFGITFGLPILVHVF), 80 to 100 (VFGLFSWSATLWTLGYYALSL), 136 to 156 (LAILAAGTIAQGAEFPVWTFI), 160 to 180 (FAQIISANILFAFALAIFVYV), 230 to 250 (EFMEMRPGLLGWIILNCAFIA), 255 to 275 (LYGYVTDSILFITAIQAFYVF), and 324 to 344 (QLGAFGLIAVGAVLAAGYSIF). NADP(+)-binding positions include Lys351, Arg355, Ile378, Trp383, and 390 to 391 (NY). A helical membrane pass occupies residues 436 to 456 (ARGWGIVFTYFYILYFAILLI). NADP(+) contacts are provided by residues Asp462, 466-470 (CSKKY), and Tyr477.

The protein belongs to the ERG4/ERG24 family.

The protein localises to the membrane. It catalyses the reaction 4,4-dimethyl-5alpha-cholesta-8,24-dien-3beta-ol + NADP(+) = 4,4-dimethyl-5alpha-cholesta-8,14,24-trien-3beta-ol + NADPH + H(+). Its pathway is steroid biosynthesis; zymosterol biosynthesis; zymosterol from lanosterol: step 2/6. Its function is as follows. Reduces the C14=C15 double bond of 4,4-dimethyl-cholesta-8,14,24-trienol to produce 4,4-dimethyl-cholesta-8,24-dienol. The protein is Delta(14)-sterol reductase (erg-3) of Neurospora crassa (strain ATCC 24698 / 74-OR23-1A / CBS 708.71 / DSM 1257 / FGSC 987).